The chain runs to 216 residues: DNA gyrase subunit B (216 aa).

Positions 140-216 (SELYLVEGDS…PDKLRYHKII (77 aa)) constitute a Toprim domain.

This sequence belongs to the type II topoisomerase GyrB family. As to quaternary structure, heterotetramer, composed of two GyrA and two GyrB chains. In the heterotetramer, GyrA contains the active site tyrosine that forms a transient covalent intermediate with DNA, while GyrB binds cofactors and catalyzes ATP hydrolysis.

It localises to the cytoplasm. It carries out the reaction ATP-dependent breakage, passage and rejoining of double-stranded DNA.. Functionally, a type II topoisomerase that negatively supercoils closed circular double-stranded (ds) DNA in an ATP-dependent manner to modulate DNA topology and maintain chromosomes in an underwound state. Negative supercoiling favors strand separation, and DNA replication, transcription, recombination and repair, all of which involve strand separation. Also able to catalyze the interconversion of other topological isomers of dsDNA rings, including catenanes and knotted rings. Type II topoisomerases break and join 2 DNA strands simultaneously in an ATP-dependent manner. The polypeptide is DNA gyrase subunit B (gyrB) (Acinetobacter bereziniae (Acinetobacter genomosp. 10)).